A 112-amino-acid polypeptide reads, in one-letter code: MPLYEYECDSCGVFTALRKMSESSLPAECDCCGAVSPRILSVPKLAIMDKLQRSAHERNEKSANEPRTARRSSCGCTGSHTCKTKPPVNQDTGKPGLQMQTKKTARPWMVGH.

Positions glutamine 52 to threonine 68 are enriched in basic and acidic residues. The interval glutamine 52–histidine 112 is disordered. A compositionally biased stretch (polar residues) spans cysteine 74–lysine 102.

Its subcellular location is the cytoplasm. In terms of biological role, may be a positive regulator of formamidase. This chain is Putative regulatory protein FmdB (fmdB), found in Methylophilus methylotrophus (Bacterium W3A1).